Consider the following 757-residue polypeptide: 5-methyltetrahydropteroyltriglutamate--homocysteine methyltransferase (757 aa).

5-methyltetrahydropteroyltri-L-glutamate contacts are provided by residues 17-20 (RELK) and lysine 117. Residues 432 to 434 (IGS) and glutamate 485 contribute to the L-homocysteine site. L-methionine is bound by residues 432 to 434 (IGS) and glutamate 485. 5-methyltetrahydropteroyltri-L-glutamate contacts are provided by residues 516 to 517 (RC) and tryptophan 562. L-homocysteine is bound at residue aspartate 600. Aspartate 600 contacts L-methionine. Glutamate 606 lines the 5-methyltetrahydropteroyltri-L-glutamate pocket. Histidine 642, cysteine 644, and glutamate 666 together coordinate Zn(2+). Histidine 695 (proton donor) is an active-site residue. Cysteine 727 contributes to the Zn(2+) binding site.

It belongs to the vitamin-B12 independent methionine synthase family. The cofactor is Zn(2+).

It catalyses the reaction 5-methyltetrahydropteroyltri-L-glutamate + L-homocysteine = tetrahydropteroyltri-L-glutamate + L-methionine. It functions in the pathway amino-acid biosynthesis; L-methionine biosynthesis via de novo pathway; L-methionine from L-homocysteine (MetE route): step 1/1. Catalyzes the transfer of a methyl group from 5-methyltetrahydrofolate to homocysteine resulting in methionine formation. The sequence is that of 5-methyltetrahydropteroyltriglutamate--homocysteine methyltransferase from Erwinia tasmaniensis (strain DSM 17950 / CFBP 7177 / CIP 109463 / NCPPB 4357 / Et1/99).